The primary structure comprises 1207 residues: Ras GTPase-activating protein gap-2 (1207 aa).

Disordered stretches follow at residues 1 to 29 and 221 to 316; these read MKVI…SCTK and RMSS…GSLR. The 344-residue stretch at 40 to 383 folds into the PH domain; that stretch reads PPICHGWLIV…WMENLRKTMN (344 aa). A compositionally biased stretch (low complexity) spans 223-236; the sequence is SSSSHNLSTRLSGS. Composition is skewed to polar residues over residues 237 to 247 and 286 to 297; these read TQNLNQPTNAY and ASNTPSRDSSLY. A C2 domain is found at 374-490; that stretch reads WMENLRKTMN…SSRSPVERWY (117 aa). A compositionally biased stretch (polar residues) spans 495–504; it reads SHSDSGTSRI. The tract at residues 495–516 is disordered; sequence SHSDSGTSRIASALGGKSSSQE. The region spanning 579 to 789 is the Ras-GAP domain; the sequence is NLAKEFLCDL…HRMKDFLLRI (211 aa). Disordered stretches follow at residues 856 to 903, 923 to 1013, 1086 to 1107, and 1163 to 1207; these read GVFH…LGRS, FQTP…SSSS, ATGG…RASR, and LKSK…VVPN. Composition is skewed to polar residues over residues 862-876 and 891-903; these read MVQQ…SPQQ and TPPT…LGRS. The span at 939–953 shows a compositional bias: low complexity; sequence TGTSSSRTSDKTTSS. Positions 955-972 are enriched in basic and acidic residues; that stretch reads EIRDDTDSDFELREDRGR. Over residues 985-1013 the composition is skewed to low complexity; it reads ASPSSSQQASSGYLSNNPSRSSYSNSSSS. Residues 1181–1207 show a composition bias toward low complexity; that stretch reads SGASEDSYDSLSSLDRPSRQSLVVVPN.

In terms of tissue distribution, mainly expressed in gonads and vulval cells. Isoform c in expressed in pharyngeal epithelial cells and several rectal/blast cells in the tail region. Isoform f is weakly expressed in four cells symmetrically located in the vulval region. Isoform g is strongly expressed in the pharyngeal muscle cells m6 in addition to several cells in the tail region.

It localises to the cytoplasm. In terms of biological role, GTPase-activating protein, which acts as a negative regulator for the member of the Ras family let-60. Probably decreases the signaling activity of Ras by stimulating its intrinsic GTPase activity, thereby lowering the levels of GTP-bound, active Ras. The different isoforms may play a distinct role in specific tissues. This is Ras GTPase-activating protein gap-2 (gap-2) from Caenorhabditis elegans.